The primary structure comprises 203 residues: Excretory canal abnormal exc-13 (203 aa).

An N-terminal signal peptide occupies residues 1 to 20 (MIGFLKFALIGTVLLGVANG). 3 N-linked (GlcNAc...) asparagine glycosylation sites follow: Asn-32, Asn-84, and Asn-188.

Belongs to the UPF0376 family.

It localises to the secreted. The polypeptide is Excretory canal abnormal exc-13 (Caenorhabditis elegans).